Reading from the N-terminus, the 357-residue chain is MSESGGGTVATARQRQLVERALGEWQGEVAGRVIVVTGGARGIGRSLCEGLLRAGAKVVAADLTWDDADDFRKQLESDGSGMAVDMDITDDDALDAARDAVIDRFGTVDVLVNNASLVSETLFPPTGHRNTLDTTDRDWEVMFGVNVFGTLKAIRRFIEPMRAQQRGSIVNVVSSGVLAVAAGGGYHGLRPWTVEMPYQATKAAVMALTFYLAEEVRGDGVAVNAIMPGHTRASWFDATARAFNEQGIAYFMRPAIPEHLLPISLFLAAQDSAGASGRLYYVPEWNYDHGYGDYAAWQDHELPPDMEEIYSRLEAATPSYERAGVAHLPFDAQGALYAAGMANLGAQNSWTSNDSAQ.

Residues 36-67 (VTGG…TWDD) and Asp87 contribute to the NADP(+) site. Tyr198 serves as the catalytic Proton acceptor. Lys202 provides a ligand contact to NADP(+).

It belongs to the short-chain dehydrogenases/reductases (SDR) family.

The enzyme catalyses 9H-fluoren-9-ol + NADP(+) = 9H-fluoren-9-one + NADPH + H(+). The catalysed reaction is 9H-fluoren-9-ol + NAD(+) = 9H-fluoren-9-one + NADH + H(+). The protein operates within aromatic compound metabolism. Catalyzes the dehydrogenation of both 9-fluorenol and 1,1a-dihydroxy-1-hydro-9-fluorenone to produce 9-fluorenone and 2'-carboxy-2,3- dihydroxybiphenyl, respectively. In Terrabacter sp. (strain DBF63), this protein is Fluoren-9-ol dehydrogenase.